Here is a 285-residue protein sequence, read N- to C-terminus: Pantothenate synthetase (285 aa).

An ATP-binding site is contributed by 30–37 (MGNLHQGH). H37 (proton donor) is an active-site residue. Q61 is a binding site for (R)-pantoate. Residue Q61 participates in beta-alanine binding. Residue 149–152 (GQKD) participates in ATP binding. (R)-pantoate is bound at residue Q155. ATP is bound by residues V178 and 186-189 (LSSR).

Belongs to the pantothenate synthetase family. In terms of assembly, homodimer.

It is found in the cytoplasm. The enzyme catalyses (R)-pantoate + beta-alanine + ATP = (R)-pantothenate + AMP + diphosphate + H(+). Its pathway is cofactor biosynthesis; (R)-pantothenate biosynthesis; (R)-pantothenate from (R)-pantoate and beta-alanine: step 1/1. Functionally, catalyzes the condensation of pantoate with beta-alanine in an ATP-dependent reaction via a pantoyl-adenylate intermediate. This is Pantothenate synthetase from Aeromonas hydrophila subsp. hydrophila (strain ATCC 7966 / DSM 30187 / BCRC 13018 / CCUG 14551 / JCM 1027 / KCTC 2358 / NCIMB 9240 / NCTC 8049).